The chain runs to 634 residues: Chaperone protein DnaK (634 aa).

T198 carries the phosphothreonine; by autocatalysis modification. The tract at residues 599-634 is disordered; sequence KQTQEGAEAASEAGEQSAGDEGVVDAEFEEVDEQNK. Residues 602–619 are compositionally biased toward low complexity; the sequence is QEGAEAASEAGEQSAGDE. Acidic residues predominate over residues 620–634; that stretch reads GVVDAEFEEVDEQNK.

It belongs to the heat shock protein 70 family.

In terms of biological role, acts as a chaperone. The chain is Chaperone protein DnaK from Syntrophotalea carbinolica (strain DSM 2380 / NBRC 103641 / GraBd1) (Pelobacter carbinolicus).